A 288-amino-acid chain; its full sequence is Lipoyl synthase (288 aa).

The [4Fe-4S] cluster site is built by cysteine 39, cysteine 44, cysteine 50, cysteine 65, cysteine 69, cysteine 72, and serine 276. Residues 51 to 265 (WGKGTATFMI…KETGLKKGFE (215 aa)) form the Radical SAM core domain.

This sequence belongs to the radical SAM superfamily. Lipoyl synthase family. The cofactor is [4Fe-4S] cluster.

The protein resides in the cytoplasm. It catalyses the reaction [[Fe-S] cluster scaffold protein carrying a second [4Fe-4S](2+) cluster] + N(6)-octanoyl-L-lysyl-[protein] + 2 oxidized [2Fe-2S]-[ferredoxin] + 2 S-adenosyl-L-methionine + 4 H(+) = [[Fe-S] cluster scaffold protein] + N(6)-[(R)-dihydrolipoyl]-L-lysyl-[protein] + 4 Fe(3+) + 2 hydrogen sulfide + 2 5'-deoxyadenosine + 2 L-methionine + 2 reduced [2Fe-2S]-[ferredoxin]. Its pathway is protein modification; protein lipoylation via endogenous pathway; protein N(6)-(lipoyl)lysine from octanoyl-[acyl-carrier-protein]: step 2/2. Catalyzes the radical-mediated insertion of two sulfur atoms into the C-6 and C-8 positions of the octanoyl moiety bound to the lipoyl domains of lipoate-dependent enzymes, thereby converting the octanoylated domains into lipoylated derivatives. This Bacteroides fragilis (strain ATCC 25285 / DSM 2151 / CCUG 4856 / JCM 11019 / LMG 10263 / NCTC 9343 / Onslow / VPI 2553 / EN-2) protein is Lipoyl synthase.